The primary structure comprises 553 residues: MSDIALTVSILALVAVVGLFIGNVKFRGIGLGIGGVLFGGIIVGHFVSQAGMTLSSDMLHVIQEFGLILFVYTIGIQVGPGFFASLRVSGLRLNLFAVLIVIIGGLVTAILHKLFDIPLPVVLGIFSGAVTNTPALGAGQQILRDLGTPMEMVDQMGMSYAMAYPFGICGILFTMWMLRVIFRVNVETEAQQHESSRTNGGALIKTINIRVENPNLHDLAIKDVPILNGDKIICSRLKREETLKVPSPDTIIQLGDLLHLVGQPADLHNAQLVIGQEVDTSLSTKGTDLRVERVVVTNENVLGKRIRDLHFKERYDVVISRLNRAGVELVASGDISLQFGDILNLVGRPSAIDAVANVLGNAQQKLQQVQMLPVFIGIGLGVLLGSIPVFVPGFPAALKLGLAGGPLIMALILGRIGSIGKLYWFMPPSANLALRELGIVLFLSVVGLKSGGDFVNTLVNGEGLSWIGYGALITAVPLITVGILARMLAKMNYLTMCGMLAGSMTDPPALAFANNLHPTSGAAALSYATVYPLVMFLRIITPQLLAVLFWSIG.

5 consecutive transmembrane segments (helical) span residues 4–24 (IALTVSILALVAVVGLFIGNV), 28–48 (GIGLGIGGVLFGGIIVGHFVS), 65–85 (FGLILFVYTIGIQVGPGFFAS), 95–115 (LFAVLIVIIGGLVTAILHKLF), and 158–178 (MSYAMAYPFGICGILFTMWML). RCK C-terminal domains are found at residues 191–276 (QQHE…VIGQ) and 279–361 (DTSL…VLGN). The next 6 membrane-spanning stretches (helical) occupy residues 371-391 (MLPVFIGIGLGVLLGSIPVFV), 393-413 (GFPAALKLGLAGGPLIMALIL), 439-459 (IVLFLSVVGLKSGGDFVNTLV), 464-484 (LSWIGYGALITAVPLITVGIL), 493-513 (YLTMCGMLAGSMTDPPALAFA), and 533-553 (LVMFLRIITPQLLAVLFWSIG).

The protein belongs to the AAE transporter (TC 2.A.81) family. YidE subfamily.

The protein resides in the cell membrane. The protein is Putative transport protein YidE of Escherichia coli (strain ATCC 8739 / DSM 1576 / NBRC 3972 / NCIMB 8545 / WDCM 00012 / Crooks).